A 160-amino-acid polypeptide reads, in one-letter code: Putative UPF0479 protein YNL339W-B (160 aa).

Helical transmembrane passes span 39–59 (IVFC…KVLQ) and 136–156 (VPMI…ISQH).

Belongs to the UPF0479 family.

The protein resides in the membrane. The protein is Putative UPF0479 protein YNL339W-B of Saccharomyces cerevisiae (strain ATCC 204508 / S288c) (Baker's yeast).